A 215-amino-acid chain; its full sequence is Enolase-phosphatase E1 (215 aa).

D11 and E13 together coordinate Mg(2+). Substrate-binding positions include 117-118 (SS) and K151. D174 contributes to the Mg(2+) binding site.

It belongs to the HAD-like hydrolase superfamily. MasA/MtnC family. Monomer. Requires Mg(2+) as cofactor.

The protein resides in the cytoplasm. Its subcellular location is the nucleus. The catalysed reaction is 5-methylsulfanyl-2,3-dioxopentyl phosphate + H2O = 1,2-dihydroxy-5-(methylsulfanyl)pent-1-en-3-one + phosphate. It functions in the pathway amino-acid biosynthesis; L-methionine biosynthesis via salvage pathway; L-methionine from S-methyl-5-thio-alpha-D-ribose 1-phosphate: step 3/6. It participates in amino-acid biosynthesis; L-methionine biosynthesis via salvage pathway; L-methionine from S-methyl-5-thio-alpha-D-ribose 1-phosphate: step 4/6. Its function is as follows. Bifunctional enzyme that catalyzes the enolization of 2,3-diketo-5-methylthiopentyl-1-phosphate (DK-MTP-1-P) into the intermediate 2-hydroxy-3-keto-5-methylthiopentenyl-1-phosphate (HK-MTPenyl-1-P), which is then dephosphorylated to form the acireductone 1,2-dihydroxy-3-keto-5-methylthiopentene (DHK-MTPene). The protein is Enolase-phosphatase E1 (utr4) of Schizosaccharomyces japonicus (strain yFS275 / FY16936) (Fission yeast).